The following is a 953-amino-acid chain: Zinc finger protein 507 (953 aa).

Ser95 is subject to Phosphoserine. 3 consecutive C2H2-type zinc fingers follow at residues 125-147 (YQCS…IKQH), 155-185 (LMCS…ANIH), and 248-270 (YRCL…AWKH). Ser427 bears the Phosphoserine mark. The tract at residues 470–489 (KGLATDENAPPGRRRTNSES) is disordered. C2H2-type zinc fingers lie at residues 641–663 (YRCR…LRVH), 669–691 (YQCP…MIHH), 697–720 (YQCK…REQH), 758–780 (YRCD…RRIH), and 786–808 (YRCS…MWKH). Residues 831 to 891 (GRVLGKTPGK…KLSPTSNTSY (61 aa)) form a disordered region. Over residues 854–891 (TGSSENAVSSSELMSQTPSEVLGTNENEKLSPTSNTSY) the composition is skewed to polar residues. Residues 911–933 (FCCCICGFESTSKENLLDHMKEH) form a C2H2-type 9 zinc finger.

The protein belongs to the krueppel C2H2-type zinc-finger protein family.

The protein localises to the nucleus. May be involved in transcriptional regulation. This is Zinc finger protein 507 (ZNF507) from Pongo abelii (Sumatran orangutan).